The following is a 197-amino-acid chain: Ion-translocating oxidoreductase complex subunit B (197 aa).

Positions 1-26 (MSTILIAIIALAALAAVFGAILGFAS) are hydrophobic. Residues 32–90 (EADPIVDQIDSILPQTQCGQCGYPGCRPYAEAIANGDQINKCPPGGQATIEKLADLMGV) form the 4Fe-4S domain. [4Fe-4S] cluster is bound by residues cysteine 49, cysteine 52, cysteine 57, cysteine 73, cysteine 114, cysteine 117, cysteine 120, cysteine 124, cysteine 144, cysteine 147, cysteine 150, and cysteine 154. 4Fe-4S ferredoxin-type domains are found at residues 105 to 134 (TVAF…GGTK) and 135 to 164 (ALHT…MIPV).

The protein belongs to the 4Fe4S bacterial-type ferredoxin family. RnfB subfamily. As to quaternary structure, the complex is composed of six subunits: RnfA, RnfB, RnfC, RnfD, RnfE and RnfG. [4Fe-4S] cluster is required as a cofactor.

Its subcellular location is the cell inner membrane. Its function is as follows. Part of a membrane-bound complex that couples electron transfer with translocation of ions across the membrane. The chain is Ion-translocating oxidoreductase complex subunit B from Vibrio campbellii (strain ATCC BAA-1116).